The sequence spans 299 residues: Oxygen-dependent coproporphyrinogen-III oxidase (299 aa).

Serine 92 serves as a coordination point for substrate. 2 residues coordinate a divalent metal cation: histidine 96 and histidine 106. The active-site Proton donor is the histidine 106. Residue 108–110 (NVR) coordinates substrate. Histidine 145 and histidine 175 together coordinate a divalent metal cation. The tract at residues 240–275 (YVEFNLVWDRGTLFGLQTGGRTESILMSMPPLVRWE) is important for dimerization. 258 to 260 (GGR) is a binding site for substrate.

This sequence belongs to the aerobic coproporphyrinogen-III oxidase family. In terms of assembly, homodimer. The cofactor is a divalent metal cation.

The protein localises to the cytoplasm. The catalysed reaction is coproporphyrinogen III + O2 + 2 H(+) = protoporphyrinogen IX + 2 CO2 + 2 H2O. Its pathway is porphyrin-containing compound metabolism; protoporphyrin-IX biosynthesis; protoporphyrinogen-IX from coproporphyrinogen-III (O2 route): step 1/1. Functionally, involved in the heme biosynthesis. Catalyzes the aerobic oxidative decarboxylation of propionate groups of rings A and B of coproporphyrinogen-III to yield the vinyl groups in protoporphyrinogen-IX. This Shigella flexneri protein is Oxygen-dependent coproporphyrinogen-III oxidase.